A 131-amino-acid chain; its full sequence is MSWQAYVDEHLMCEIEGHHLASAAILGHDGTVWAQSADFPQFKPEEITGIMKDFDEPGHLAPTGMFVAAAKYMVIQGEPGVVIRGKKGAGGITIKKTGQALVVGIYDEPMTPGQCDMVVGRLGDYLLEQGL.

The cysteines at positions 13 and 115 are disulfide-linked. The short motif at 81–97 (VVIRGKKGAGGITIKKT) is the Involved in PIP2 interaction element. Threonine 111 is modified (phosphothreonine).

The protein belongs to the profilin family. In terms of assembly, occurs in many kinds of cells as a complex with monomeric actin in a 1:1 ratio. Post-translationally, phosphorylated by MAP kinases.

It is found in the cytoplasm. It localises to the cytoskeleton. In terms of biological role, binds to actin and affects the structure of the cytoskeleton. At high concentrations, profilin prevents the polymerization of actin, whereas it enhances it at low concentrations. The chain is Profilin-6 from Corylus avellana (European hazel).